We begin with the raw amino-acid sequence, 369 residues long: GTPase Obg (369 aa).

The 159-residue stretch at 1–159 folds into the Obg domain; that stretch reads MKFIDEAKIE…RELRLELKVL (159 aa). The tract at residues 128-148 is disordered; sequence IHFKSSTNRAPRQKSEGKEGE. The OBG-type G domain maps to 160–333; that stretch reads ADIGLLGMPN…LVTEIYDYIA (174 aa). GTP contacts are provided by residues 166–173, 191–195, 213–216, 283–286, and 314–316; these read GMPNAGKS, FTTLH, DIPG, NKLD, and SAL. Positions 173 and 193 each coordinate Mg(2+).

It belongs to the TRAFAC class OBG-HflX-like GTPase superfamily. OBG GTPase family. Monomer. Requires Mg(2+) as cofactor.

The protein resides in the cytoplasm. Its function is as follows. An essential GTPase which binds GTP, GDP and possibly (p)ppGpp with moderate affinity, with high nucleotide exchange rates and a fairly low GTP hydrolysis rate. Plays a role in control of the cell cycle, stress response, ribosome biogenesis and in those bacteria that undergo differentiation, in morphogenesis control. This chain is GTPase Obg, found in Herminiimonas arsenicoxydans.